The primary structure comprises 1828 residues: MANSTGKAPPDERRKGLAFLDELRQFHHSRGSPFKKIPAVGGKELDLHGLYTRVTTLGGFAKVSEKNQWGEIVEEFNFPRSCSNAAFALKQYYLRYLEKYEKVHHFGEDDDEVPPGNPKPQLPIGAIPSSYNYQQHSVSDYLRQSYGLSMDFNSPNDYNKLVLSLLSGLPNEVDFAINVCTLLSNESKHVMQLEKDPKIITLLLANAGVFDDTLGSFSSVFGEEWREKTDRDFVKFWKDIVDDNEVRDLISDRNKAHEDTPGEWIWESLFHPPRKLGINDIEGQRVLQIAVILRNLSFEESNVKLLAANRTCLRFLLLSAHSHFISLRQLGLDTLGNIAAELLLDPVDFRTTHLMFHTVTKCLMSRDRFLKMRGMEILGNLCKAEDNGVLICEYVDQDSYREIICHLTLPDVLLVTSTLEVLYMLTEMGDVACTKIAKVEKSIDVLVCLVSMDAQMFGPDALAAVKLIEHPSSSHQVLSEIRPQAIEQVQTQTHIASGPASRAVVAQHAAPPPGIVEIDSEKFACQWLNAHFEVNPDCSVSRAEMYSEYLSTCSKLARGGILTSTGFYKCLRTVFPNHTVKRVEDSTSSGQAHIHVIGVKRRALPLPIQMYYQQQPISTPVVRVDAVADLSPTPSPAGIPHGPQAAGNHFQRTPVTNQSSNLTATQMSFPVQGIHTVAQTVSRIPPNPSVHTHQQQNSPVTVIQNKAPIPCEVVKATVIQNSVPQTAVPVSISVGGAPAQNSVGQNHSAGPQPVTVVNSQTLLHHPSVMPQPSPLHTVVPGQVPSGTPVTVIQQTVPQSRMFGRVQSIPACTSTVSQGQQLITTSPQPMHTSSQQTAAGSQPQDTVIIAPPQYVTTSASNIVSATSVQNFQVATGQVVTIAGVPSPQPSRVGFQNIAPKPLPSQQVSPSVVQQPIQQPQQPAQQSVVIVSQPAQQGQAYAPAIHQIVLANPAALPAGQTVQLTGQPNITPSSSPSPVPPTNNQVPTAMSSSSTLQSQGPPPTVSQMLSVKRQQQQQHSPAAPAQQVQVQVQQPQQVQVQVQPQQPSAGVGQPAPNESSLIKQLLLPKRGPSTPGGKLILPAPQIPPPNNARAPSPQVVYQVANNQAAGFGVQGQTPAQQLLVGQQNVQLVQSAMPPAGGVQTVPISNLQILPGPLISNSPATIFQGTSGNQVTITVVPNTSFATATVSQGNAAQLIAPAGLSMSGAQASAGLQVQTLPAGQSACTTAPLPFKGDKIICQKEEEAKEATGLHVHERKIEVMENPSCRRGTTNTSNGDTSESELQVGSLLNGRKYSDSSLPPSNSGKLQSETSQCSLISNGPSLELGENGAPGKQNSEPVDMQDVKGDLKKALVNGICDFDKGDGSHLSKNIPNHKTSNHVGNGEISPVEPQGTSGATQQDTAKGDQLERVSNGPVLTLGGSPSTSSMQEAPSVATPPLSGTDLPNGPLASSLNSDVPQQRPSVVVSPHSTAPVIQGHQVIAVPHSGPRVTPSALSSDARSTNGTAECKTVKRPAEDNDRDTVPGIPNKVGVRIVTISDPNNAGCSATMVAVPAGADPSTVAKVAIESAAQQKQQHPPTYMQSVAPQNTPMPPSPAVQVQGQPSSSQPSPVSASSQHADPVRKPGQNFMCLWQSCKKWFQTPSQVFYHAATEHGGKDVYPGQCLWEGCEPFQRQRFSFITHLQDKHCSKDALLAGLKQDEPGQVANQKSSTKQPTVGGTGSAPRAQKAIASHPSAALMALRRGSRNLVFRDFTDEKEGPITKHIRLTAALILKNIGKYSECGRRLLKRHENNLSVLAISNMEASSTLAKCLYELNFTVQSKEQEKDSEML.

Ala-2 carries the post-translational modification N-acetylalanine. Ser-4 is modified (phosphoserine). Glycyl lysine isopeptide (Lys-Gly) (interchain with G-Cter in SUMO2) cross-links involve residues Lys-7, Lys-15, and Lys-119. Positions 13–105 (RRKGLAFLDE…YLEKYEKVHH (93 aa)) constitute an ARID domain. The LXXLL signature appears at 313 to 317 (LRFLL). The RFX-type winged-helix DNA-binding region spans 524-603 (ACQWLNAHFE…IHVIGVKRRA (80 aa)). Lys-555 participates in a covalent cross-link: Glycyl lysine isopeptide (Lys-Gly) (interchain with G-Cter in SUMO2). Residues Ser-631 and Ser-635 each carry the phosphoserine modification. Thr-653 is subject to Phosphothreonine. Ser-689 is modified (phosphoserine). At Thr-692 the chain carries Phosphothreonine. Disordered stretches follow at residues 824-843 (TSPQ…SQPQ), 962-1028 (LTGQ…QVQV), 1245-1339 (KEAT…EPVD), 1360-1462 (KGDG…RPSV), 1483-1503 (HSGP…TNGT), and 1566-1618 (SAAQ…HADP). Over residues 987–1011 (AMSSSSTLQSQGPPPTVSQMLSVKR) the composition is skewed to polar residues. The span at 1012-1028 (QQQQQHSPAAPAQQVQV) shows a compositional bias: low complexity. Residues 1245–1259 (KEATGLHVHERKIEV) show a composition bias toward basic and acidic residues. Polar residues predominate over residues 1267–1283 (RGTTNTSNGDTSESELQ). At Ser-1294 the chain carries Phosphoserine. Composition is skewed to polar residues over residues 1295-1320 (DSSL…SNGP) and 1366-1379 (LSKN…SNHV). Residue Ser-1385 is modified to Phosphoserine. Polar residues-rich tracts occupy residues 1390 to 1400 (QGTSGATQQDT) and 1419 to 1428 (GSPSTSSMQE). Over residues 1453–1462 (SDVPQQRPSV) the composition is skewed to low complexity. A Phosphoserine modification is found at Ser-1491. 2 stretches are compositionally biased toward polar residues: residues 1491–1503 (SALS…TNGT) and 1567–1586 (AAQQ…APQN). Low complexity predominate over residues 1594-1614 (AVQVQGQPSSSQPSPVSASSQ). The C2H2-type zinc finger occupies 1626–1651 (FMCLWQSCKKWFQTPSQVFYHAATEH). Residues Lys-1695, Lys-1710, and Lys-1725 each participate in a glycyl lysine isopeptide (Lys-Gly) (interchain with G-Cter in SUMO2) cross-link. The tract at residues 1697 to 1726 (DEPGQVANQKSSTKQPTVGGTGSAPRAQKA) is disordered. Over residues 1702–1714 (VANQKSSTKQPTV) the composition is skewed to polar residues.

It belongs to the RFX family. As to quaternary structure, component of the SWI/SNF-B (PBAF) chromatin remodeling complex, at least composed of SMARCA4/BRG1, SMARCB1/BAF47/SNF5, ACTL6A/BAF53A or ACTL6B/BAF53B, SMARCE1/BAF57, SMARCD1/BAF60A, SMARCD2/BAF60B, perhaps SMARCD3/BAF60C, SMARCC1/BAF155, SMARCC2/BAF170, PBRM1/BAF180, ARID2/BAF200 and actin. Interacts with SRF. Forms complexes with SRF and SRF cofactors MYOCD, NKX2-5 and SRFBP1. Highly expressed in testis, expressed in heart, liver and kidney.

It is found in the nucleus. Involved in transcriptional activation and repression of select genes by chromatin remodeling (alteration of DNA-nucleosome topology). Required for the stability of the SWI/SNF chromatin remodeling complex SWI/SNF-B (PBAF). May be involved in targeting the complex to different genes. May be involved in regulating transcriptional activation of cardiac genes. The sequence is that of AT-rich interactive domain-containing protein 2 from Mus musculus (Mouse).